The following is an 890-amino-acid chain: DNA mismatch repair protein MutS (890 aa).

645-652 serves as a coordination point for ATP; the sequence is GPNMAGKS.

The protein belongs to the DNA mismatch repair MutS family.

Its function is as follows. This protein is involved in the repair of mismatches in DNA. It is possible that it carries out the mismatch recognition step. This protein has a weak ATPase activity. This Rickettsia rickettsii (strain Iowa) protein is DNA mismatch repair protein MutS.